The chain runs to 573 residues: Multidrug and toxin extrusion protein 2 (573 aa).

Over 1–46 (MEPAEDSLGATIQPPELVRVPRGRSLRILLGLRGALSPDVRREAAA) the chain is Cytoplasmic. A helical membrane pass occupies residues 47–67 (LVALAGPVFLAQLMIFLISIV). Residues 68 to 81 (SSIFCGHLGKVELD) lie on the Extracellular side of the membrane. Residues 82-102 (AVTLAVSVVNVTGISVGTGLA) form a helical membrane-spanning segment. Residues 103 to 122 (SACDTLMSQSFGGKNLKRVG) lie on the Cytoplasmic side of the membrane. The helical transmembrane segment at 123 to 143 (VILQRGILILLLCCFPCWAIF) threads the bilayer. Residues 144–161 (LNTERLLLLLRQDPDVAR) are Extracellular-facing. A helical transmembrane segment spans residues 162-182 (LAQVYVMICIPALPAAFLFQL). Over 183–196 (QTRYLQSQGIIMPQ) the chain is Cytoplasmic. Residues 197 to 217 (VIVGIAANVVNVGMNAFLLYA) traverse the membrane as a helical segment. The Extracellular portion of the chain corresponds to 218–225 (LDLGVVGS). A helical transmembrane segment spans residues 226–246 (AWANTTSQFFLSALLFLYVWW). The Cytoplasmic portion of the chain corresponds to 247 to 266 (KRIHIHTWGGWTRECFQEWS). A helical transmembrane segment spans residues 267 to 286 (SYTRLAIPSMFMVCIEWWTF). Residues 287–304 (EIGTFLAGLVNVTELGAQ) are Extracellular-facing. The helical transmembrane segment at 305 to 325 (AVIYELASVAYMVPFGFGVAA) threads the bilayer. At 326–345 (SVRVGNALGAGNADQARCSC) the chain is on the cytoplasmic side. A helical membrane pass occupies residues 346-366 (TTVLLCAGVCALLVGILLAAL). At 367–379 (KDVVAYIFTNDKD) the chain is on the extracellular side. Residues 380-400 (IISLVSQVMPIFAPFHLFDAL) traverse the membrane as a helical segment. Residues 401–415 (AGTCGGVLRGTGKQK) are Cytoplasmic-facing. Residues 416–436 (IGAVLNTIGYYGFGFPIGVSL) form a helical membrane-spanning segment. Over 437 to 443 (MFAAKLG) the chain is Extracellular. Residues 444-464 (IIGLWAGLIVCVSFQAFSYLI) traverse the membrane as a helical segment. Residues 465-545 (YILRTNWSRV…VGEVLTGRQL (81 aa)) lie on the Cytoplasmic side of the membrane. A helical membrane pass occupies residues 546-566 (VFYRGMALTVSVAVLIAGIVV). Residues 567–573 (RVFNDRG) lie on the Extracellular side of the membrane.

It belongs to the multi antimicrobial extrusion (MATE) (TC 2.A.66.1) family. As to expression, expressed in testis; especially in testicular Leydig cells.

The protein resides in the cell membrane. Functionally, multidrug efflux pump that functions as a H(+)/organic cation antiporter. May mediate testosterone efflux from the Leydig cells in the testes. The chain is Multidrug and toxin extrusion protein 2 (Slc47a2) from Mus musculus (Mouse).